A 221-amino-acid polypeptide reads, in one-letter code: MLAVYQTRFLEAALAADALKFGEFTLKSGRHSPYFFNAAAFCNGKLLSVMTEAYAAVIAELHETCAIDVLFGPAYKGIPLVAGIAQALFHRYDINLAWAFNRKETKTHGEGGNIVGASVAGKKVLLVDDVLTAGTAVRQSLALLAQEQAMPVGLVIALDRQEKVGDSNLSALKQFSVENQLQTRAIITLDDLMTFVKESGKPAVLEKMQAYRKIYGISEAD.

Lysine 27 provides a ligand contact to 5-phospho-alpha-D-ribose 1-diphosphate. 35–36 serves as a coordination point for orotate; that stretch reads FF. Residues 75–76, arginine 102, lysine 103, lysine 106, histidine 108, and 128–136 each bind 5-phospho-alpha-D-ribose 1-diphosphate; these read YK and DDVLTAGTA. The orotate site is built by threonine 132 and arginine 160.

The protein belongs to the purine/pyrimidine phosphoribosyltransferase family. PyrE subfamily. As to quaternary structure, homodimer. Mg(2+) serves as cofactor.

The catalysed reaction is orotidine 5'-phosphate + diphosphate = orotate + 5-phospho-alpha-D-ribose 1-diphosphate. Its pathway is pyrimidine metabolism; UMP biosynthesis via de novo pathway; UMP from orotate: step 1/2. Its function is as follows. Catalyzes the transfer of a ribosyl phosphate group from 5-phosphoribose 1-diphosphate to orotate, leading to the formation of orotidine monophosphate (OMP). The protein is Orotate phosphoribosyltransferase of Dichelobacter nodosus (strain VCS1703A).